The sequence spans 181 residues: ATP-dependent protease subunit HslV (181 aa).

T7 is an active-site residue. Positions 166, 169, and 172 each coordinate Na(+).

The protein belongs to the peptidase T1B family. HslV subfamily. A double ring-shaped homohexamer of HslV is capped on each side by a ring-shaped HslU homohexamer. The assembly of the HslU/HslV complex is dependent on binding of ATP.

Its subcellular location is the cytoplasm. It catalyses the reaction ATP-dependent cleavage of peptide bonds with broad specificity.. Allosterically activated by HslU binding. Its function is as follows. Protease subunit of a proteasome-like degradation complex believed to be a general protein degrading machinery. The sequence is that of ATP-dependent protease subunit HslV from Anaeromyxobacter dehalogenans (strain 2CP-C).